Here is a 30-residue protein sequence, read N- to C-terminus: GLKDWVKIAGGWLKKKGPGILKAAMAAATQ.

As to expression, expressed by the venom gland.

The protein localises to the secreted. In terms of biological role, has activity against some Gram-positive bacteria and S.cerevisiae. Has a non-hemolytic activity. The sequence is that of U1-poneritoxin-Ng3e from Neoponera goeldii (Ponerine ant).